A 347-amino-acid polypeptide reads, in one-letter code: Quinolinate synthase (347 aa).

Iminosuccinate contacts are provided by histidine 47 and serine 68. A [4Fe-4S] cluster-binding site is contributed by cysteine 113. Iminosuccinate contacts are provided by residues 139-141 (YAN) and serine 156. Cysteine 200 serves as a coordination point for [4Fe-4S] cluster. Residues 226–228 (HPE) and threonine 243 contribute to the iminosuccinate site. Cysteine 297 serves as a coordination point for [4Fe-4S] cluster.

This sequence belongs to the quinolinate synthase family. Type 1 subfamily. The cofactor is [4Fe-4S] cluster.

Its subcellular location is the cytoplasm. It catalyses the reaction iminosuccinate + dihydroxyacetone phosphate = quinolinate + phosphate + 2 H2O + H(+). It functions in the pathway cofactor biosynthesis; NAD(+) biosynthesis; quinolinate from iminoaspartate: step 1/1. Functionally, catalyzes the condensation of iminoaspartate with dihydroxyacetone phosphate to form quinolinate. In Escherichia coli O9:H4 (strain HS), this protein is Quinolinate synthase.